The chain runs to 454 residues: N-myc 2 proto-oncogene protein (454 aa).

Disordered stretches follow at residues 133–166 (EKMQ…HSGT), 231–270 (AAPP…EEEE), and 326–374 (SPYV…VRRR). Over residues 256–270 (ALSDEVDEEEDEEEE) the composition is skewed to acidic residues. The segment covering 363–374 (RKSDSEDSVRRR) has biased composition (basic and acidic residues). One can recognise a bHLH domain in the interval 371 to 423 (VRRRNHNILERQRRNDLRSSFTTLRDHVPELVKNEKAAKVVILKKACEYVHYL). Residues 423-444 (LQAKEHQLLMEKEKLQARQQQL) form a leucine-zipper region.

In terms of assembly, efficient DNA binding requires dimerization with another bHLH protein.

It is found in the nucleus. The sequence is that of N-myc 2 proto-oncogene protein (N-MYC2) from Otospermophilus beecheyi (California ground squirrel).